The primary structure comprises 801 residues: Phenylalanine--tRNA ligase beta subunit (801 aa).

The tRNA-binding domain occupies Gly39–Phe147. The B5 domain maps to Leu401–Val477. Positions 455, 461, 464, and 465 each coordinate Mg(2+). In terms of domain architecture, FDX-ACB spans Ser708–Arg801.

The protein belongs to the phenylalanyl-tRNA synthetase beta subunit family. Type 1 subfamily. As to quaternary structure, tetramer of two alpha and two beta subunits. The cofactor is Mg(2+).

It is found in the cytoplasm. The catalysed reaction is tRNA(Phe) + L-phenylalanine + ATP = L-phenylalanyl-tRNA(Phe) + AMP + diphosphate + H(+). The sequence is that of Phenylalanine--tRNA ligase beta subunit from Geobacter metallireducens (strain ATCC 53774 / DSM 7210 / GS-15).